The primary structure comprises 598 residues: Probable translation initiation factor IF-2 (598 aa).

Residues leucine 3–lysine 225 enclose the tr-type G domain. Positions glycine 12–threonine 19 are G1. Glycine 12–threonine 19 provides a ligand contact to GTP. The interval glycine 37–histidine 41 is G2. Residues aspartate 76–glycine 79 form a G3 region. Residues aspartate 76–histidine 80 and asparagine 130–aspartate 133 each bind GTP. The interval asparagine 130 to aspartate 133 is G4. A G5 region spans residues serine 200 to methionine 202.

The protein belongs to the TRAFAC class translation factor GTPase superfamily. Classic translation factor GTPase family. IF-2 subfamily.

In terms of biological role, function in general translation initiation by promoting the binding of the formylmethionine-tRNA to ribosomes. Seems to function along with eIF-2. The chain is Probable translation initiation factor IF-2 from Methanococcus maripaludis (strain DSM 14266 / JCM 13030 / NBRC 101832 / S2 / LL).